A 465-amino-acid polypeptide reads, in one-letter code: MSNNIGKVVQVIGPVVDIKFANDELPNIFNAIHIKMDDGKILVCEVEQHVGDDIVRTIAMEATEGLRRGVEAVDTGAPISVPVGECVLGRIFNVLGKPLDSGAEVNNEEKYPIHRPAPSFEEQSVVPQMFETGIKVIDLLAPYQRGGKIGLFGGAGVGKTVLIQELINNIAKEHGGLSVFTGVGERSREGNDLYYEMMESGVIKNTALVFGQMNEPPGARMRVALTGLTMAEYFRDQGQDVLLFIDNIFRFSQAGSEVSALLGRIPSAVGYQPTLATEMGALQERITSTTHGSITSVQAVYVPADDLTDPAPATTFNHLDAKTVLSRSIAEIGIYPAVDPLDSSSRILDPRVVGEEHYEVASKVKHILERYKELQDIIAILGVDELADEDKLIVARARRIQKFLSQPFTVAEQFTGMQGRYVPIKETIRGFKEILEGKHDNVPESAFLFAGTIEEVLEKARAMAQ.

ATP is bound at residue 153–160 (GGAGVGKT).

The protein belongs to the ATPase alpha/beta chains family. F-type ATPases have 2 components, CF(1) - the catalytic core - and CF(0) - the membrane proton channel. CF(1) has five subunits: alpha(3), beta(3), gamma(1), delta(1), epsilon(1). CF(0) has three main subunits: a(1), b(2) and c(9-12). The alpha and beta chains form an alternating ring which encloses part of the gamma chain. CF(1) is attached to CF(0) by a central stalk formed by the gamma and epsilon chains, while a peripheral stalk is formed by the delta and b chains.

It is found in the cell membrane. The enzyme catalyses ATP + H2O + 4 H(+)(in) = ADP + phosphate + 5 H(+)(out). In terms of biological role, produces ATP from ADP in the presence of a proton gradient across the membrane. The catalytic sites are hosted primarily by the beta subunits. The polypeptide is ATP synthase subunit beta (Clostridium perfringens (strain ATCC 13124 / DSM 756 / JCM 1290 / NCIMB 6125 / NCTC 8237 / Type A)).